The following is a 343-amino-acid chain: Holliday junction branch migration complex subunit RuvB (343 aa).

The large ATPase domain (RuvB-L) stretch occupies residues 1 to 186 (MVMARKSDTL…FQIQERLEYY (186 aa)). Residues leucine 25, arginine 26, glycine 67, lysine 70, threonine 71, serine 72, 133 to 135 (EDF), arginine 176, tyrosine 186, and arginine 223 each bind ATP. Threonine 71 is a binding site for Mg(2+). Positions 187–257 (DAKALESILH…LAQKSLDRLG (71 aa)) are small ATPAse domain (RuvB-S). Residues 260–343 (ASGLDSMDRK…PPPTPQGSLF (84 aa)) form a head domain (RuvB-H) region. Positions 296, 315, and 320 each coordinate DNA.

This sequence belongs to the RuvB family. In terms of assembly, homohexamer. Forms an RuvA(8)-RuvB(12)-Holliday junction (HJ) complex. HJ DNA is sandwiched between 2 RuvA tetramers; dsDNA enters through RuvA and exits via RuvB. An RuvB hexamer assembles on each DNA strand where it exits the tetramer. Each RuvB hexamer is contacted by two RuvA subunits (via domain III) on 2 adjacent RuvB subunits; this complex drives branch migration. In the full resolvosome a probable DNA-RuvA(4)-RuvB(12)-RuvC(2) complex forms which resolves the HJ.

The protein resides in the cytoplasm. The catalysed reaction is ATP + H2O = ADP + phosphate + H(+). In terms of biological role, the RuvA-RuvB-RuvC complex processes Holliday junction (HJ) DNA during genetic recombination and DNA repair, while the RuvA-RuvB complex plays an important role in the rescue of blocked DNA replication forks via replication fork reversal (RFR). RuvA specifically binds to HJ cruciform DNA, conferring on it an open structure. The RuvB hexamer acts as an ATP-dependent pump, pulling dsDNA into and through the RuvAB complex. RuvB forms 2 homohexamers on either side of HJ DNA bound by 1 or 2 RuvA tetramers; 4 subunits per hexamer contact DNA at a time. Coordinated motions by a converter formed by DNA-disengaged RuvB subunits stimulates ATP hydrolysis and nucleotide exchange. Immobilization of the converter enables RuvB to convert the ATP-contained energy into a lever motion, pulling 2 nucleotides of DNA out of the RuvA tetramer per ATP hydrolyzed, thus driving DNA branch migration. The RuvB motors rotate together with the DNA substrate, which together with the progressing nucleotide cycle form the mechanistic basis for DNA recombination by continuous HJ branch migration. Branch migration allows RuvC to scan DNA until it finds its consensus sequence, where it cleaves and resolves cruciform DNA. This Myxococcus xanthus (strain DK1622) protein is Holliday junction branch migration complex subunit RuvB.